Consider the following 282-residue polypeptide: S-formylglutathione hydrolase (282 aa).

The residue at position 4 (lysine 4) is an N6-succinyllysine. Serine 149 functions as the Charge relay system in the catalytic mechanism. At lysine 200 the chain carries N6-acetyllysine. Residues aspartate 226 and histidine 260 each act as charge relay system in the active site.

This sequence belongs to the esterase D family. In terms of assembly, homodimer.

Its subcellular location is the cytoplasm. The protein localises to the cytoplasmic vesicle. It carries out the reaction S-formylglutathione + H2O = formate + glutathione + H(+). Serine hydrolase involved in the detoxification of formaldehyde. The protein is S-formylglutathione hydrolase (Esd) of Rattus norvegicus (Rat).